A 196-amino-acid chain; its full sequence is Urease accessory protein UreE (196 aa).

Residues 150–196 (RGAYSGGHDHGHAHAHSHAEAHSHAHGESHSHSHSHSHDDHHHHDHD) are disordered. Positions 156-196 (GHDHGHAHAHSHAEAHSHAHGESHSHSHSHSHDDHHHHDHD) are enriched in basic and acidic residues.

Belongs to the UreE family.

It localises to the cytoplasm. Functionally, involved in urease metallocenter assembly. Binds nickel. Probably functions as a nickel donor during metallocenter assembly. In Mesorhizobium japonicum (strain LMG 29417 / CECT 9101 / MAFF 303099) (Mesorhizobium loti (strain MAFF 303099)), this protein is Urease accessory protein UreE.